We begin with the raw amino-acid sequence, 705 residues long: uncharacterized protein (705 aa).

Catalysis depends on charge relay system residues S554 and H676.

Belongs to the peptidase S9A family.

This is an uncharacterized protein from Sinorhizobium fredii (strain NBRC 101917 / NGR234).